The chain runs to 234 residues: Probable transcriptional regulatory protein MYCGA1330 (234 aa).

Belongs to the TACO1 family.

The protein localises to the cytoplasm. In Mycoplasmoides gallisepticum (strain R(low / passage 15 / clone 2)) (Mycoplasma gallisepticum), this protein is Probable transcriptional regulatory protein MYCGA1330.